A 228-amino-acid chain; its full sequence is L-ribulose-5-phosphate 4-epimerase UlaF (228 aa).

Substrate contacts are provided by residues 26 to 27, 43 to 44, and 72 to 73; these read GN, SG, and SS. Aspartate 74, histidine 93, and histidine 95 together coordinate Zn(2+). Catalysis depends on aspartate 118, which acts as the Proton donor/acceptor. Residue histidine 167 participates in Zn(2+) binding. Catalysis depends on tyrosine 225, which acts as the Proton donor/acceptor.

Belongs to the aldolase class II family. AraD/FucA subfamily. Requires Zn(2+) as cofactor.

The enzyme catalyses L-ribulose 5-phosphate = D-xylulose 5-phosphate. Its pathway is cofactor degradation; L-ascorbate degradation; D-xylulose 5-phosphate from L-ascorbate: step 4/4. Its function is as follows. Catalyzes the isomerization of L-ribulose 5-phosphate to D-xylulose 5-phosphate. Is involved in the anaerobic L-ascorbate utilization. The chain is L-ribulose-5-phosphate 4-epimerase UlaF from Escherichia coli (strain 55989 / EAEC).